We begin with the raw amino-acid sequence, 356 residues long: N-acyl-phosphatidylethanolamine-hydrolyzing phospholipase D 1 (356 aa).

Residues His-144 and His-146 each coordinate Zn(2+). Tyr-147 is an an N-acyl-1,2-diacyl-sn-glycero-3-phosphoethanolamine binding site. Asp-148, His-149, His-217, and Asp-248 together coordinate Zn(2+). His-286 provides a ligand contact to an N-acyl-1,2-diacyl-sn-glycero-3-phosphoethanolamine. Residue His-308 coordinates Zn(2+).

Belongs to the NAPE-PLD family. The cofactor is Zn(2+). Expressed in interneurons that are in close proximity to the primary sensory neurons. Predominantly expressed in the pharynx but can also be found in cell bodies of the dorsal and ventral nerve cords.

It catalyses the reaction an N-acyl-1,2-diacyl-sn-glycero-3-phosphoethanolamine + H2O = an N-acylethanolamine + a 1,2-diacyl-sn-glycero-3-phosphate + H(+). The catalysed reaction is 1,2-dihexadecanoyl-sn-glycero-3-phospho-(N-hexadecanoyl)-ethanolamine + H2O = 1,2-dihexadecanoyl-sn-glycero-3-phosphate + N-hexadecanoylethanolamine + H(+). It carries out the reaction N-(5Z,8Z,11Z,14Z-eicosatetraenoyl)-1,2-di-(9Z-octadecenoyl)-sn-glycero-3-phosphoethanolamine + H2O = N-(5Z,8Z,11Z,14Z-eicosatetraenoyl)-ethanolamine + 1,2-di-(9Z-octadecenoyl)-sn-glycero-3-phosphate + H(+). In terms of biological role, D-type phospholipase that hydrolyzes N-acyl-phosphatidylethanolamines (NAPEs) to produce bioactive N-acylethanolamines/fatty acid ethanolamides (NAEs/FAEs) and phosphatidic acid. NAEs are bioactive lipids that are involved in diverse physiological processes such as growth and lifespan. The protein is N-acyl-phosphatidylethanolamine-hydrolyzing phospholipase D 1 of Caenorhabditis elegans.